A 282-amino-acid chain; its full sequence is Cuticle collagen 8 (282 aa).

A signal peptide spans 1 to 24 (MLVCVFVALYTMMGLLTDIKQLQS). The tract at residues 86–282 (GPKSEGCPAG…CPCPGRSYKA (197 aa)) is disordered. Triple-helical region regions lie at residues 95 to 124 (GPPGPPGEGGQSGEPGHDGDDGKPGAPGVI) and 141 to 269 (GRPG…PGPD). A compositionally biased stretch (gly residues) spans 170–180 (TGGQGGPGEQG). Over residues 214-224 (PPGPRGPPGPE) the composition is skewed to pro residues. Gly residues predominate over residues 225–234 (GNPGGAGEDG). The segment covering 235 to 244 (NQGPVGHPGV) has biased composition (low complexity).

Belongs to the cuticular collagen family. As to quaternary structure, collagen polypeptide chains are complexed within the cuticle by disulfide bonds and other types of covalent cross-links.

Nematode cuticles are composed largely of collagen-like proteins. The cuticle functions both as an exoskeleton and as a barrier to protect the worm from its environment. This Caenorhabditis elegans protein is Cuticle collagen 8 (col-8).